The sequence spans 279 residues: Urease accessory protein UreD (279 aa).

This sequence belongs to the UreD family. In terms of assembly, ureD, UreF and UreG form a complex that acts as a GTP-hydrolysis-dependent molecular chaperone, activating the urease apoprotein by helping to assemble the nickel containing metallocenter of UreC. The UreE protein probably delivers the nickel.

Its subcellular location is the cytoplasm. Required for maturation of urease via the functional incorporation of the urease nickel metallocenter. The chain is Urease accessory protein UreD from Pseudomonas fluorescens (strain ATCC BAA-477 / NRRL B-23932 / Pf-5).